A 703-amino-acid polypeptide reads, in one-letter code: Leucine zipper putative tumor suppressor 3 (703 aa).

3 disordered regions span residues 1–22, 40–190, and 204–347; these read MAPA…PHLF, RADP…SEPL, and FHSM…PPSP. Residues 96-107 are compositionally biased toward low complexity; sequence GSFPGPRSSGSG. Residues 109–124 show a composition bias toward basic and acidic residues; it reads NRERPGPGRYPSEDKV. A compositionally biased stretch (polar residues) spans 205 to 218; sequence HSMQNLCPPQTNGT. Residues 251-268 show a composition bias toward low complexity; sequence DSGRNSLTSLPTYSSSYS. A compositionally biased stretch (gly residues) spans 290 to 299; the sequence is SSGGGGGGSG. Residues 304 to 324 are compositionally biased toward low complexity; that stretch reads GTSDSGRASSKSGSSSSMGRS. Over residues 325–336 the composition is skewed to gly residues; it reads GHLGSGEGGNGG. A phosphoserine mark is found at serine 346 and serine 348. 2 coiled-coil regions span residues 348-526 and 600-669; these read SALI…SLRD and TRAL…RLRE. A disordered region spans residues 665 to 703; the sequence is RRLRERGAAGGSRTPTPQHGEEEKAWTPSRLERIESTEI. A compositionally biased stretch (basic and acidic residues) spans 683 to 703; sequence HGEEEKAWTPSRLERIESTEI.

This sequence belongs to the LZTS3 family. As to quaternary structure, interacts (via C-terminus) with SHANK3 (via PDZ domain). Interacts (via coiled coil) with SIPA1L1. Can form homooligomers. As to expression, detected in brain, with highest expression in brain cortex, caudate putamen, cerebellum and hippocampus. Detected in neuropil (at protein level). Detected in brain and kidney.

It is found in the synapse. It localises to the postsynaptic density. The protein localises to the cell projection. Its subcellular location is the dendritic spine. The protein resides in the dendrite. It is found in the cytoplasm. It localises to the cytoskeleton. Its function is as follows. May be involved in promoting the maturation of dendritic spines, probably via regulating SIPA1L1 levels at the postsynaptic density of synapses. The protein is Leucine zipper putative tumor suppressor 3 of Rattus norvegicus (Rat).